The sequence spans 274 residues: Rhamnulose-1-phosphate aldolase (274 aa).

The active site involves E117. The Zn(2+) site is built by H141, H143, and H212.

The protein belongs to the aldolase class II family. RhaD subfamily. Homotetramer. It depends on Zn(2+) as a cofactor.

It localises to the cytoplasm. It catalyses the reaction L-rhamnulose 1-phosphate = (S)-lactaldehyde + dihydroxyacetone phosphate. Its pathway is carbohydrate degradation; L-rhamnose degradation; glycerone phosphate from L-rhamnose: step 3/3. Catalyzes the reversible cleavage of L-rhamnulose-1-phosphate to dihydroxyacetone phosphate (DHAP) and L-lactaldehyde. In Escherichia fergusonii (strain ATCC 35469 / DSM 13698 / CCUG 18766 / IAM 14443 / JCM 21226 / LMG 7866 / NBRC 102419 / NCTC 12128 / CDC 0568-73), this protein is Rhamnulose-1-phosphate aldolase.